Here is a 332-residue protein sequence, read N- to C-terminus: MSESIDINVYSQTTIPNAMAELMDNHNKMEQISAYCKSLYANGDAAQAYEQTQGYAKNALLNVAYHIQTVGTHITSLLQLQTNEMEKLNIEIQTLTQRVRMIHDSTGTNVFSNQDAAKPYKSSLKNRKVDTEATKAPVKYVHKPISYGISASDINQNGVPPPLNHSNSSANLTSSSGHLAASSTSNSSTPSYQSPSYSSQPTISSGTPPPIQKQPPRVGNAPPPPSLSVPAAPPPPVMNVPPPPPTSQRPSSVNNNAPSNDFPPPPPPSSSSSGGDLPPPPSFGLPPPPTLGDDFPPPPPPPVGSYDFPPPPARPQSQFYDHNDFPPPPPPM.

Residues His73–Asp104 adopt a coiled-coil conformation. The segment at Ser152–Met332 is disordered. A compositionally biased stretch (low complexity) spans Asn164–Gly206. Pro residues predominate over residues Ala221–Ser247. The span at Gln248–Ala257 shows a compositional bias: polar residues. Pro residues predominate over residues Leu277 to Arg314.

The protein belongs to the ABI family. Part of a Scar/WAVE complex containing brk1, scrA, abiA, pirA and napA. Interacts with scrA.

Its function is as follows. Involved in regulation of actin and microtubule organization. Required for proper cytokinesis. The chain is Abl interactor homolog (abiA) from Dictyostelium discoideum (Social amoeba).